The chain runs to 371 residues: Putative glutamate--cysteine ligase 2 (371 aa).

The protein belongs to the glutamate--cysteine ligase type 2 family. YbdK subfamily. In terms of assembly, homodimer.

It carries out the reaction L-cysteine + L-glutamate + ATP = gamma-L-glutamyl-L-cysteine + ADP + phosphate + H(+). Its function is as follows. ATP-dependent carboxylate-amine ligase which exhibits weak glutamate--cysteine ligase activity. This Klebsiella pneumoniae (strain 342) protein is Putative glutamate--cysteine ligase 2.